A 597-amino-acid chain; its full sequence is Aspartate--tRNA(Asp/Asn) ligase (597 aa).

Glu175 serves as a coordination point for L-aspartate. The aspartate stretch occupies residues 199 to 202; the sequence is QQYK. The L-aspartate site is built by Arg221 and His454. Position 221 to 223 (221 to 223) interacts with ATP; it reads RDE. Glu488 is an ATP binding site. Arg495 is a binding site for L-aspartate. 540–543 contributes to the ATP binding site; it reads GVDR.

The protein belongs to the class-II aminoacyl-tRNA synthetase family. Type 1 subfamily. Homodimer.

It localises to the cytoplasm. The catalysed reaction is tRNA(Asx) + L-aspartate + ATP = L-aspartyl-tRNA(Asx) + AMP + diphosphate. Functionally, aspartyl-tRNA synthetase with relaxed tRNA specificity since it is able to aspartylate not only its cognate tRNA(Asp) but also tRNA(Asn). Reaction proceeds in two steps: L-aspartate is first activated by ATP to form Asp-AMP and then transferred to the acceptor end of tRNA(Asp/Asn). The sequence is that of Aspartate--tRNA(Asp/Asn) ligase from Bartonella quintana (strain Toulouse) (Rochalimaea quintana).